The primary structure comprises 146 residues: Probable gamma-secretase subunit PEN-2 (146 aa).

Residues 1–26 (MEATRSDDPSLNPIRNRNPNPNPNPN) form a disordered region. Residues 1–61 (MEATRSDDPS…SVDYARRFYK (61 aa)) lie on the Lumenal side of the membrane. A compositionally biased stretch (low complexity) spans 9-19 (PSLNPIRNRNP). Residues 62-82 (FGFALLPWLWFVNCFYFWPVL) traverse the membrane as a helical segment. Topologically, residues 83–98 (RHSRAFPQIRNYVVRS) are cytoplasmic. Residues 99-119 (AIGFSVFTALLSAWALTFSIG) traverse the membrane as a helical segment. Over 120–146 (GEQLFGPLYDKLVMYNVADRLGLSGLA) the chain is Lumenal.

Belongs to the PEN-2 family. Probable component of the gamma-secretase complex, a complex composed of a presenilin homodimer, nicastrin, APH1 and PEN2.

It is found in the membrane. Its function is as follows. Probable subunit of the gamma-secretase complex, an endoprotease complex that catalyzes the intramembrane cleavage of integral membrane proteins such as Notch receptors. The sequence is that of Probable gamma-secretase subunit PEN-2 from Arabidopsis thaliana (Mouse-ear cress).